A 487-amino-acid chain; its full sequence is Betaine aldehyde dehydrogenase (487 aa).

Ser-26, Ile-27, and Asp-93 together coordinate K(+). 150 to 152 contacts NAD(+); it reads GAW. Residue Lys-162 is the Charge relay system of the active site. NAD(+)-binding positions include 176-179 and 229-232; these read KPSE and SVPT. Leu-244 provides a ligand contact to K(+). Glu-250 serves as the catalytic Proton acceptor. Residues Gly-252, Cys-284, and Glu-384 each contribute to the NAD(+) site. The active-site Nucleophile is the Cys-284. Cys-284 bears the Cysteine sulfenic acid (-SOH) mark. Residues Lys-454 and Gly-457 each contribute to the K(+) site. Catalysis depends on Glu-461, which acts as the Charge relay system.

It belongs to the aldehyde dehydrogenase family. Dimer of dimers. K(+) serves as cofactor.

It carries out the reaction betaine aldehyde + NAD(+) + H2O = glycine betaine + NADH + 2 H(+). Its pathway is amine and polyamine biosynthesis; betaine biosynthesis via choline pathway; betaine from betaine aldehyde: step 1/1. In terms of biological role, involved in the biosynthesis of the osmoprotectant glycine betaine. Catalyzes the irreversible oxidation of betaine aldehyde to the corresponding acid. This chain is Betaine aldehyde dehydrogenase, found in Sinorhizobium fredii (strain NBRC 101917 / NGR234).